A 155-amino-acid chain; its full sequence is Large ribosomal subunit protein uL22c (155 aa).

It belongs to the universal ribosomal protein uL22 family. As to quaternary structure, part of the 50S ribosomal subunit.

It is found in the plastid. Its subcellular location is the chloroplast. Its function is as follows. This protein binds specifically to 23S rRNA. In terms of biological role, the globular domain of the protein is located near the polypeptide exit tunnel on the outside of the subunit, while an extended beta-hairpin is found that lines the wall of the exit tunnel in the center of the 70S ribosome. This Atropa belladonna (Belladonna) protein is Large ribosomal subunit protein uL22c (rpl22).